A 276-amino-acid chain; its full sequence is Glutamate racemase (276 aa).

Substrate is bound by residues 9–10 (DS) and 41–42 (YG). The Proton donor/acceptor role is filled by Cys-72. 73–74 (NT) is a substrate binding site. Cys-183 acts as the Proton donor/acceptor in catalysis. 184-185 (TH) contributes to the substrate binding site.

Belongs to the aspartate/glutamate racemases family.

It carries out the reaction L-glutamate = D-glutamate. It participates in cell wall biogenesis; peptidoglycan biosynthesis. Functionally, provides the (R)-glutamate required for cell wall biosynthesis. The chain is Glutamate racemase from Shouchella clausii (strain KSM-K16) (Alkalihalobacillus clausii).